The following is a 313-amino-acid chain: Protein-methionine-sulfoxide reductase catalytic subunit MsrP (313 aa).

A signal peptide (tat-type signal) is located at residues 1 to 45 (MPAYRPPHIASSEITPKSFYLSRRNFLGTAAGLAAIGLAGREAIA). Mo-molybdopterin is bound by residues N71, 74-75 (YE), C128, T163, N213, R218, and 229-231 (GIK).

Belongs to the MsrP family. As to quaternary structure, heterodimer of a catalytic subunit (MsrP) and a heme-binding subunit (MsrQ). The cofactor is Mo-molybdopterin. Predicted to be exported by the Tat system. The position of the signal peptide cleavage has not been experimentally proven.

It localises to the periplasm. It catalyses the reaction L-methionyl-[protein] + a quinone + H2O = L-methionyl-(S)-S-oxide-[protein] + a quinol. The enzyme catalyses L-methionyl-[protein] + a quinone + H2O = L-methionyl-(R)-S-oxide-[protein] + a quinol. In terms of biological role, part of the MsrPQ system that repairs oxidized periplasmic proteins containing methionine sulfoxide residues (Met-O), using respiratory chain electrons. Thus protects these proteins from oxidative-stress damage caused by reactive species of oxygen and chlorine generated by the host defense mechanisms. MsrPQ is essential for the maintenance of envelope integrity under bleach stress, rescuing a wide series of structurally unrelated periplasmic proteins from methionine oxidation. The catalytic subunit MsrP is non-stereospecific, being able to reduce both (R-) and (S-) diastereoisomers of methionine sulfoxide. This is Protein-methionine-sulfoxide reductase catalytic subunit MsrP from Agrobacterium fabrum (strain C58 / ATCC 33970) (Agrobacterium tumefaciens (strain C58)).